The following is a 127-amino-acid chain: Holo-[acyl-carrier-protein] synthase (127 aa).

Mg(2+) is bound by residues aspartate 8 and glutamate 56.

Belongs to the P-Pant transferase superfamily. AcpS family. Mg(2+) is required as a cofactor.

The protein localises to the cytoplasm. The enzyme catalyses apo-[ACP] + CoA = holo-[ACP] + adenosine 3',5'-bisphosphate + H(+). Its function is as follows. Transfers the 4'-phosphopantetheine moiety from coenzyme A to a Ser of acyl-carrier-protein. This is Holo-[acyl-carrier-protein] synthase from Deinococcus deserti (strain DSM 17065 / CIP 109153 / LMG 22923 / VCD115).